The following is a 439-amino-acid chain: Omega-aminotransferase (439 aa).

112–113 lines the pyridoxal 5'-phosphate pocket; the sequence is GS. K281 is subject to N6-(pyridoxal phosphate)lysine. T318 is a pyridoxal 5'-phosphate binding site.

It belongs to the class-III pyridoxal-phosphate-dependent aminotransferase family. In terms of assembly, homotetramer. Requires pyridoxal 5'-phosphate as cofactor.

The enzyme catalyses 3-oxopropanoate + L-alanine = beta-alanine + pyruvate. It catalyses the reaction 3-aminobutanoate + pyruvate = acetoacetate + L-alanine. The catalysed reaction is benzylamine + pyruvate = benzaldehyde + L-alanine. It carries out the reaction (S)-1-phenylethylamine + pyruvate = acetophenone + L-alanine. The enzyme catalyses 2-phenylethylamine + pyruvate = 2-phenylacetaldehyde + L-alanine. It catalyses the reaction 1-phenylpropylamine + pyruvate = 1-phenylpropan-1-one + L-alanine. The catalysed reaction is 3-phenylpropylamine + pyruvate = 3-phenylpropanal + L-alanine. Its function is as follows. Aminotransferase that can use beta-amino acids, aliphatic amines, or aromatic amines as amino donors, and pyruvate as amino acceptor. Shows high activity for short-chain beta-amino acids, with the highest activity for 3-aminobutanoate and beta-alanine in vitro. Displays higher activity toward aromatic amines than aliphatic amines. May be involved in beta-alanine biosynthesis and/or degradation. This chain is Omega-aminotransferase, found in Caulobacter vibrioides (strain ATCC 19089 / CIP 103742 / CB 15) (Caulobacter crescentus).